A 513-amino-acid chain; its full sequence is cAMP-regulated M3R protein (513 aa).

The protein to D.discoideum protein M3L.

The sequence is that of cAMP-regulated M3R protein (prtB) from Dictyostelium discoideum (Social amoeba).